The primary structure comprises 54 residues: Relaxin (54 aa).

Gln-1 bears the Pyrrolidone carboxylic acid mark. 3 disulfide bridges follow: Cys-13/Cys-41, Cys-25/Cys-54, and Cys-40/Cys-45.

It belongs to the insulin family. In terms of assembly, heterodimer of a B chain and an A chain linked by two disulfide bonds.

Its subcellular location is the secreted. Its function is as follows. The function of relaxin in an oviparous species is not yet known. This is Relaxin from Squalus acanthias (Spiny dogfish).